A 139-amino-acid chain; its full sequence is Large-conductance mechanosensitive channel (139 aa).

A run of 2 helical transmembrane segments spans residues 9 to 29 (AFAVKGNVVDMAVGIIIGAAF) and 79 to 99 (IQTVIDFVIVAFAIFMGVKAI).

This sequence belongs to the MscL family. As to quaternary structure, homopentamer.

Its subcellular location is the cell inner membrane. Functionally, channel that opens in response to stretch forces in the membrane lipid bilayer. May participate in the regulation of osmotic pressure changes within the cell. The sequence is that of Large-conductance mechanosensitive channel from Pseudomonas putida (strain ATCC 700007 / DSM 6899 / JCM 31910 / BCRC 17059 / LMG 24140 / F1).